The following is a 138-amino-acid chain: Superoxide dismutase [Mn] (138 aa).

Residues H1, H49, D133, and H137 each contribute to the Mn(2+) site.

This sequence belongs to the iron/manganese superoxide dismutase family. The cofactor is Mn(2+).

It catalyses the reaction 2 superoxide + 2 H(+) = H2O2 + O2. Destroys superoxide anion radicals which are normally produced within the cells and which are toxic to biological systems. In Mycobacterium malmoense, this protein is Superoxide dismutase [Mn] (sodA).